The following is a 556-amino-acid chain: Delta-1-pyrroline-5-carboxylate dehydrogenase 12A1, mitochondrial (556 aa).

282–287 (GSSRVA) provides a ligand contact to NAD(+). Catalysis depends on E301, which acts as the Proton acceptor. The Nucleophile role is filled by C336.

The protein belongs to the aldehyde dehydrogenase family. In terms of tissue distribution, highly expressed in flowers. Constitutively expressed at low levels in the other tissues. Highly expressed in pollen grains and tissues undergoing cell death. Expressed in old leaves, mature siliques and developing embryos.

The protein resides in the mitochondrion matrix. The catalysed reaction is (S)-1-pyrroline-5-carboxylate + NAD(+) + 2 H2O = L-glutamate + NADH + H(+). It participates in amino-acid degradation; L-proline degradation into L-glutamate; L-glutamate from L-proline: step 2/2. Plays a role in the inhibition of programmed cell death by converting the toxic proline catabolism intermediate (s)-1-pyrroline-5-carboxylate (P5C) to glutamate. This Arabidopsis thaliana (Mouse-ear cress) protein is Delta-1-pyrroline-5-carboxylate dehydrogenase 12A1, mitochondrial.